The sequence spans 42 residues: Photosystem I reaction center subunit IX (42 aa).

Residues 7–27 (YLSTAPVLATLWFGFLAGLLI) traverse the membrane as a helical segment.

This sequence belongs to the PsaJ family.

It localises to the plastid. It is found in the chloroplast thylakoid membrane. May help in the organization of the PsaE and PsaF subunits. This chain is Photosystem I reaction center subunit IX, found in Anthoceros angustus (Hornwort).